The chain runs to 236 residues: Small ribosomal subunit protein uS3 (236 aa).

The KH type-2 domain occupies 39-107 (IREFLTEELK…DTSLNIVEVR (69 aa)). Residues 214–236 (ASERRAVEGDNQGSSSNRRRENA) are disordered.

This sequence belongs to the universal ribosomal protein uS3 family. Part of the 30S ribosomal subunit. Forms a tight complex with proteins S10 and S14.

In terms of biological role, binds the lower part of the 30S subunit head. Binds mRNA in the 70S ribosome, positioning it for translation. The polypeptide is Small ribosomal subunit protein uS3 (Brucella abortus (strain S19)).